The primary structure comprises 246 residues: 1-(5-phosphoribosyl)-5-[(5-phosphoribosylamino)methylideneamino] imidazole-4-carboxamide isomerase (246 aa).

The active-site Proton acceptor is the aspartate 7. The active-site Proton donor is the aspartate 130.

Belongs to the HisA/HisF family.

It is found in the cytoplasm. It catalyses the reaction 1-(5-phospho-beta-D-ribosyl)-5-[(5-phospho-beta-D-ribosylamino)methylideneamino]imidazole-4-carboxamide = 5-[(5-phospho-1-deoxy-D-ribulos-1-ylimino)methylamino]-1-(5-phospho-beta-D-ribosyl)imidazole-4-carboxamide. It functions in the pathway amino-acid biosynthesis; L-histidine biosynthesis; L-histidine from 5-phospho-alpha-D-ribose 1-diphosphate: step 4/9. This is 1-(5-phosphoribosyl)-5-[(5-phosphoribosylamino)methylideneamino] imidazole-4-carboxamide isomerase from Blochmanniella pennsylvanica (strain BPEN).